A 274-amino-acid chain; its full sequence is Homeobox-leucine zipper protein HAT9 (274 aa).

Positions 64–74 are enriched in low complexity; it reads SSHSGVSSFSS. The segment at 64-96 is disordered; that stretch reads SSHSGVSSFSSGRVVKRERDGGEESPEEEEMTE. The segment at residues 110–169 is a DNA-binding region (homeobox); that stretch reads SARKKLRLTKQQSALLEESFKDHSTLNPKQKQVLARQLNLRPRQVEVWFQNRRARTKLKQ. The tract at residues 177–198 is leucine-zipper; sequence LKKCCETLADENIRLQKEIQEL.

It belongs to the HD-ZIP homeobox family. Class II subfamily.

The protein resides in the nucleus. In terms of biological role, probable transcription factor. This chain is Homeobox-leucine zipper protein HAT9 (HAT9), found in Arabidopsis thaliana (Mouse-ear cress).